The sequence spans 1258 residues: Plasma membrane calcium-transporting ATPase 3 (1258 aa).

The segment covering 1–19 has biased composition (polar residues); that stretch reads MGDMANSSIEFHPKPQQQR. The tract at residues 1–22 is disordered; it reads MGDMANSSIEFHPKPQQQREVP. Residues 1-97 lie on the Cytoplasmic side of the membrane; the sequence is MGDMANSSIE…NFIPPKQPKT (97 aa). S8 carries the post-translational modification Phosphoserine. A helical membrane pass occupies residues 98 to 118; it reads FLQLVWEALQDVTLIILEVAA. The Extracellular portion of the chain corresponds to 119–155; that stretch reads IVSLGLSFYAPPGEESEACGNVSGGAEDEGEAEAGWI. The helical transmembrane segment at 156-176 threads the bilayer; sequence EGAAILLSVICVVLVTAFNDW. At 177–364 the chain is on the cytoplasmic side; it reads SKEKQFRGLQ…KEKSVLQGKL (188 aa). Disordered stretches follow at residues 298-328 and 335-354; these read EEEK…GAVA and KSAE…NVPK. 2 stretches are compositionally biased toward basic and acidic residues: residues 299 to 308 and 342 to 354; these read EEKKDKKGKQ and MEER…NVPK. A helical transmembrane segment spans residues 365–384; that stretch reads TKLAVQIGKAGLVMSAITVI. Topologically, residues 385-417 are extracellular; the sequence is ILVLYFVIETFVVDGRVWLAECTPVYVQYFVKF. A helical membrane pass occupies residues 418-435; it reads FIIGVTVLVVAVPEGLPL. Over 436–849 the chain is Cytoplasmic; that stretch reads AVTISLAYSV…MWGRNVYDSI (414 aa). Residue D473 is the 4-aspartylphosphate intermediate of the active site. Positions 794 and 798 each coordinate Mg(2+). The helical transmembrane segment at 850-869 threads the bilayer; it reads SKFLQFQLTVNVVAVIVAFT. Residues 870–879 are Extracellular-facing; the sequence is GACITQDSPL. The helical transmembrane segment at 880–900 threads the bilayer; the sequence is KAVQMLWVNLIMDTFASLALA. The Cytoplasmic portion of the chain corresponds to 901-920; it reads TEPPTESLLLRKPYGRDKPL. Residues 921–943 traverse the membrane as a helical segment; the sequence is ISRTMMKNILGHAVYQLTIIFTL. Over 944–961 the chain is Extracellular; that stretch reads LFVGELFFDIDSGRNAPL. The chain crosses the membrane as a helical span at residues 962–983; it reads HSPPSEHYTIIFNTFVMMQLFN. At 984–1002 the chain is on the cytoplasmic side; the sequence is EINARKIHGERNVFDGIFS. The helical transmembrane segment at 1003 to 1024 threads the bilayer; that stretch reads NPIFCTIVLGTFGIQIVIVQFG. At 1025–1034 the chain is on the extracellular side; that stretch reads GKPFSCSPLS. The helical transmembrane segment at 1035 to 1056 threads the bilayer; that stretch reads TEQWLWCLFVGVGELVWGQVIA. The Cytoplasmic portion of the chain corresponds to 1057 to 1258; that stretch reads TIPTSQLKCL…SPLHSMETSL (202 aa). T1079 carries the post-translational modification Phosphothreonine. The tract at residues 1097–1114 is calmodulin-binding subdomain A; sequence LRRGQILWFRGLNRIQTQ. A Phosphothreonine; by PKC modification is found at T1113. Residues 1115–1124 form a calmodulin-binding subdomain B region; the sequence is MEVVSTFKRS. Residue S1126 is modified to Phosphoserine. A disordered region spans residues 1204 to 1258; the sequence is ENEERLRAPPPPPPNQNNNAIDSGIYLTTHATKSATSSAFSSRPGSPLHSMETSL. Positions 1231-1245 are enriched in low complexity; it reads TTHATKSATSSAFSS.

The protein belongs to the cation transport ATPase (P-type) (TC 3.A.3) family. Type IIB subfamily. As to quaternary structure, interacts with PDZD11. Interacts (via N-terminus) with YWHAE. Expressed predominantly in brain and skeletal muscle. Expressed in the molecular layer of the cerebellar cortex, in particular in granule cells (at protein level). Expressed in aldosterone producing glomerulosa cells of adrenal glands (at protein level). Detected at low levels in various tissues including testis, stomach, small intestine, and large intestine. In terms of tissue distribution, most abundant form in brain and most other tissues. As to expression, most abundant form in skeletal muscle and is also found in brain and at low levels in testis and kidney.

The protein localises to the cell membrane. It localises to the presynaptic cell membrane. It catalyses the reaction Ca(2+)(in) + ATP + H2O = Ca(2+)(out) + ADP + phosphate + H(+). Functionally, ATP-driven Ca(2+) ion pump involved in the maintenance of basal intracellular Ca(2+) levels at the presynaptic terminals. Uses ATP as an energy source to transport cytosolic Ca(2+) ions across the plasma membrane to the extracellular compartment. May counter-transport protons, but the mechanism and the stoichiometry of this Ca(2+)/H(+) exchange remains to be established. This Rattus norvegicus (Rat) protein is Plasma membrane calcium-transporting ATPase 3 (Atp2b3).